The primary structure comprises 153 residues: Small ribosomal subunit protein bS16 (153 aa).

The disordered stretch occupies residues 130–153 (EAEAAAAAEEAPAEEAAEEAPAEA). Residues 140 to 153 (APAEEAAEEAPAEA) are compositionally biased toward acidic residues.

This sequence belongs to the bacterial ribosomal protein bS16 family.

The sequence is that of Small ribosomal subunit protein bS16 from Bifidobacterium longum subsp. infantis (strain ATCC 15697 / DSM 20088 / JCM 1222 / NCTC 11817 / S12).